The following is a 376-amino-acid chain: Heptahelical transmembrane protein ADIPOR1 (376 aa).

Residues 1–90 (MGEEAAMATM…LSLFSWHNET (90 aa)) are Cytoplasmic-facing. Residues 20 to 46 (PAAAPAPAKGGGSKKKRKQQKREEKRK) are disordered. The helical transmembrane segment at 91 to 111 (INIWTHLLGFVLFFGLTVLHL) threads the bilayer. The Extracellular portion of the chain corresponds to 112–179 (GQYFPQVADL…AAAAATTRWP (68 aa)). A helical membrane pass occupies residues 180 to 200 (FFVFLAGAMFCLLSSAACHLL). Residues 201–216 (SCHSHRLNLFLIRLDY) lie on the Cytoplasmic side of the membrane. The chain crosses the membrane as a helical span at residues 217–237 (TGIAVMIVVSFFPPIYYIFQC). Topologically, residues 238 to 240 (EPR) are extracellular. Residues 241–261 (WQVVYLSAITAAGVATVYALM) form a helical membrane-spanning segment. Residues 262–274 (SPRLSAARYRAHR) are Cytoplasmic-facing. A helical transmembrane segment spans residues 275 to 295 (ALLFVAMGLSGVVPAAHAVAV). Topologically, residues 296 to 303 (NWHEPRRN) are extracellular. The chain crosses the membrane as a helical span at residues 304-324 (VTLAYEGAMAASYLAGTAFYL). The Cytoplasmic portion of the chain corresponds to 325 to 344 (TRVPERWRPGMFDLCGHSHQ). The chain crosses the membrane as a helical span at residues 345-365 (IFHALVIAGALAHYAAAIVFI). Over 366 to 376 (QARDEMGCPAP) the chain is Extracellular.

Belongs to the ADIPOR family.

The protein localises to the membrane. In terms of biological role, may play a role in abiotic stress response. The protein is Heptahelical transmembrane protein ADIPOR1 (ADIPOR1) of Oryza sativa subsp. japonica (Rice).